A 254-amino-acid chain; its full sequence is Hydroxyethylthiazole kinase (254 aa).

Substrate is bound at residue Met-40. Residues Arg-116 and Ser-162 each coordinate ATP. Gly-189 contacts substrate.

Belongs to the Thz kinase family. It depends on Mg(2+) as a cofactor.

The enzyme catalyses 5-(2-hydroxyethyl)-4-methylthiazole + ATP = 4-methyl-5-(2-phosphooxyethyl)-thiazole + ADP + H(+). It participates in cofactor biosynthesis; thiamine diphosphate biosynthesis; 4-methyl-5-(2-phosphoethyl)-thiazole from 5-(2-hydroxyethyl)-4-methylthiazole: step 1/1. In terms of biological role, catalyzes the phosphorylation of the hydroxyl group of 4-methyl-5-beta-hydroxyethylthiazole (THZ). In Limosilactobacillus fermentum (strain NBRC 3956 / LMG 18251) (Lactobacillus fermentum), this protein is Hydroxyethylthiazole kinase.